Here is a 688-residue protein sequence, read N- to C-terminus: MKTRQNKYSIRKFSVGASSILIAALLFMGGGSAQAAEQQQDKGTVENSTTQSIGDENEKLSEQQSTQNKNVNEKSNVDSITENESLHNETPKNEDLIQQQKDSQNDNKSESVVEQNKENEAFVKKHSEEKPQQEQVELEKHASENNQTLHSKAAQSNEDVKTKPSQLDNTTAQQEDSQKENLSKQDTQSSKTTDLLRATGQNQSKDSQSTEEVNKEVKNDTQQVTAKNDDDKVETFNLNSKEEPLKVDKQANPTTDKDKSSKNDKGSHDGLANLESNAVATTNKQSKQQVSEKNEDQTNKSAKQKQYKNNDPIILVHGFNGFTDDINPSVLTHYWGGDKMNIRQDLEENGYEAYEASISAFGSNYDRAVELYYYIKGGRVDYGAAHAAKYGHERYGKTYEGVYKDWKPGQKIHLVGHSMGGQTIRQLEELLRHGNPEEVEYQKQHGGEISPLFQGGHDNMVSSITTLGTPHNGTHASDLLGNEAIVRQLAYDVGKMYGNKDSRVDFGLEHWGLKQKPNESYIQYVKRVQNSKLWKSKDSGLHDLTRDGATDLNRKTSLNPNIVYKTYTGESTHKTLAGKQKADLNMFLPFTITGNLIGKAKEKEWRENDGLVSVISSQHPFNQKYVEATDKNQKGVWQVTPTKHDWDHVDFVGQDSTDTKRTRDELQQFWHGLADDLVQSEQLTSTNK.

The N-terminal stretch at 1-35 (MKTRQNKYSIRKFSVGASSILIAALLFMGGGSAQA) is a signal peptide. Residues 31 to 309 (GSAQAAEQQQ…KSAKQKQYKN (279 aa)) are disordered. Residues 36-302 (AEQQQDKGTV…KNEDQTNKSA (267 aa)) constitute a propeptide, removed in mature form. The span at 45-54 (VENSTTQSIG) shows a compositional bias: polar residues. Basic and acidic residues-rich tracts occupy residues 84–95 (ESLHNETPKNED) and 103–143 (SQND…KHAS). Polar residues-rich tracts occupy residues 144 to 175 (ENNQTLHSKAAQSNEDVKTKPSQLDNTTAQQE) and 184 to 211 (KQDTQSSKTTDLLRATGQNQSKDSQSTE). Residues 227–268 (KNDDDKVETFNLNSKEEPLKVDKQANPTTDKDKSSKNDKGSH) are compositionally biased toward basic and acidic residues. Positions 274–289 (LESNAVATTNKQSKQQ) are enriched in polar residues. S418 (nucleophile) is an active-site residue. The active-site Charge relay system is the D609. D647 lines the Ca(2+) pocket. H648 acts as the Charge relay system in catalysis. The Ca(2+) site is built by D650, D655, and D658.

The protein belongs to the AB hydrolase superfamily. Lipase family.

Its subcellular location is the secreted. The catalysed reaction is a triacylglycerol + H2O = a diacylglycerol + a fatty acid + H(+). This Staphylococcus epidermidis (strain ATCC 35984 / DSM 28319 / BCRC 17069 / CCUG 31568 / BM 3577 / RP62A) protein is Lipase (lip).